The following is a 306-amino-acid chain: Palmitoyl-protein thioesterase 1 (306 aa).

The signal sequence occupies residues 1 to 27; sequence MASPSCLWLLAVALLPWTCAARALHHL. Cystine bridges form between C45-C46, C96-C128, and C152-C160. The active site involves S115. 3 N-linked (GlcNAc...) asparagine glycosylation sites follow: N197, N212, and N232. Catalysis depends on residues D233 and H289.

This sequence belongs to the palmitoyl-protein thioesterase family. Interacts with CLN5, ATP5F1A and ATP5F1B. In terms of processing, glycosylated.

The protein resides in the lysosome. It is found in the secreted. Its subcellular location is the golgi apparatus. The protein localises to the endoplasmic reticulum. It carries out the reaction S-hexadecanoyl-L-cysteinyl-[protein] + H2O = L-cysteinyl-[protein] + hexadecanoate + H(+). It catalyses the reaction hexadecanoyl-CoA + H2O = hexadecanoate + CoA + H(+). The enzyme catalyses S-hexadecanoyl-N-acetylcysteamine + H2O = N-acetylcysteamine + hexadecanoate + H(+). The catalysed reaction is S-hexadecanoyl-N-acetylcysteine methyl ester + H2O = N-acetylcysteine methyl ester + hexadecanoate + H(+). With respect to regulation, palmitoylation reduces PPT1 enzymatic activity. Its function is as follows. Has thioesterase activity against fatty acid thioesters with 14 -18 carbons, including palmitoyl-CoA, S-palmitoyl-N-acetylcysteamine, and palmitoylated proteins. In contrast to PPT2, PPT1 can hydrolyze palmitoylated proteins and palmitoylcysteine. This is Palmitoyl-protein thioesterase 1 (PPT1) from Macaca fascicularis (Crab-eating macaque).